The sequence spans 505 residues: Endoglucanase 5 (505 aa).

Positions 1–31 are cleaved as a signal peptide; that stretch reads MWMRRNQIVRKLTLGVVTTVLGMSLSFSALS. Residues 32 to 334 are catalytic; sequence ATPVETHGQL…REQIRAGANL (303 aa). Substrate is bound by residues His64, 68–69, Tyr95, and His130; that span reads WF. Catalysis depends on Glu168, which acts as the Proton donor. Tyr230 contacts substrate. Glu256 (nucleophile) is an active-site residue. Residues 262–263, Trp290, and 295–297 each bind substrate; these read AS and KSE. Positions 332 to 355 are disordered; the sequence is ANLGGGDTPTTPTEPTNPGNGTTG. Residues 335 to 352 form a linker region; that stretch reads GGGDTPTTPTEPTNPGNG. A compositionally biased stretch (low complexity) spans 339–355; it reads TPTTPTEPTNPGNGTTG. Positions 353–505 constitute a CBM3 domain; that stretch reads TTGDVVLQYR…KGTLVWGVEP (153 aa).

The protein belongs to the glycosyl hydrolase 5 (cellulase A) family.

The protein localises to the secreted. It catalyses the reaction Endohydrolysis of (1-&gt;4)-beta-D-glucosidic linkages in cellulose, lichenin and cereal beta-D-glucans.. Its function is as follows. Endoglucanase with some exoglucanase activity. The protein is Endoglucanase 5 (celV) of Pectobacterium carotovorum subsp. carotovorum (Erwinia carotovora subsp. carotovora).